The chain runs to 392 residues: MAAPLRIQSDWAQALRKDEGEAWLSCHPPGKPSLYGSLTCQGIGLDGIPEVTASEGFTVNEINKKSIHISCPKENASSKFLAPYTTFSRIHTKSITCLDISSRGGLGVSSSTDGTMKIWQASNGELRRVLEGHVFDVNCCRFFPSGLVVLSGGMDAQLKIWSAEDASCVVTFKGHKGGILDTAIVDRGRNVVSASRDGTARLWDCGRSACLGVLADCGSSINGVAVGAADNSINLGSPEQMPSEREVGTEAKMLLLAREDKKLQCLGLQSRQLVFLFIGSDAFNCCTFLSGFLLLAGTQDGNIYQLDVRSPRAPVQVIHRSGAPVLSLLSVRDGFIASQGDGSCFIVQQDLDYVTELTGADCDPVYKVATWEKQIYTCCRDGLVRRYQLSDL.

N-acetylalanine is present on Ala-2. WD repeat units follow at residues 82–121 (APYTTFSRIHTKSITCLDISSRGGLGVSSSTDGTMKIWQA), 125–163 (ELRRVLEGHVFDVNCCRFFPSGLVVLSGGMDAQLKIWSA), 167–205 (SCVVTFKGHKGGILDTAIVDRGRNVVSASRDGTARLWDC), 209–259 (ACLG…LARE), 270–308 (SRQLVFLFIGSDAFNCCTFLSGFLLLAGTQDGNIYQLDV), 313–349 (APVQVIHRSGAPVLSLLSVRDGFIASQGDGSCFIVQQ), and 353–389 (YVTELTGADCDPVYKVATWEKQIYTCCRDGLVRRYQL).

The protein belongs to the WD repeat PAAF1/RPN14 family. In terms of assembly, interacts with PSMC1, PSMC2, PSMC3, PSMC4, PSMC5 and PSMC6. Interacts with SUPT6H. (Microbial infection) Interacts with HIV-1 Tat. As to expression, ubiquitously expressed, with highest levels in kidney, brain and testis.

Inhibits proteasome 26S assembly and proteolytic activity by impairing the association of the 19S regulatory complex with the 20S core. In case of HIV-1 infection, recruited by viral Tat to the HIV-1 promoter, where it promotes the recruitment of 19S regulatory complex through dissociation of the proteasome 26S. This presumably promotes provirus transcription efficiency. Protects SUPT6H from proteasomal degradation. The sequence is that of Proteasomal ATPase-associated factor 1 (PAAF1) from Homo sapiens (Human).